We begin with the raw amino-acid sequence, 414 residues long: Membrane protein UL43 (414 aa).

Transmembrane regions (helical) follow at residues 39 to 59 (GFAH…VVLS), 61 to 81 (GPYA…LGFL), 96 to 116 (AWLR…GEAG), 121 to 141 (VPGP…LLVL), 148 to 168 (LFLL…VGGL), and 184 to 204 (AAAL…GDSF). The interval 225–253 (PRYAPEDAERPTDHGPLLPSTHHQRSPRV) is disordered. Positions 228–237 (APEDAERPTD) are enriched in basic and acidic residues. Helical transmembrane passes span 339-359 (GLMF…AVWI) and 383-403 (ATLR…GVLV).

Belongs to the alphaherpesvirinae HHV-1 UL43 family.

The protein localises to the membrane. The protein is Membrane protein UL43 of Homo sapiens (Human).